Consider the following 241-residue polypeptide: Small ribosomal subunit protein uS2 (241 aa).

It belongs to the universal ribosomal protein uS2 family.

The protein is Small ribosomal subunit protein uS2 of Buchnera aphidicola subsp. Cinara cedri (strain Cc).